A 352-amino-acid chain; its full sequence is Photosystem II D2 protein (352 aa).

Residue Thr-2 is modified to N-acetylthreonine. Thr-2 bears the Phosphothreonine mark. The chain crosses the membrane as a helical span at residues 40 to 60 (CAYFALGGWLTGTTFVSSWYT). Chlorophyll a is bound at residue His-117. A helical membrane pass occupies residues 124–140 (GFMLRQFEIARAVQIRP). Pheophytin a contacts are provided by Gln-129 and Asn-142. A helical transmembrane segment spans residues 152-165 (VFVSVFLIYPLGQS). Chlorophyll a is bound at residue His-197. Residues 207 to 227 (AALLCAIHGATVENTLFEDGD) traverse the membrane as a helical segment. Residues His-214 and Phe-261 each coordinate a plastoquinone. Residue His-214 participates in Fe cation binding. His-268 provides a ligand contact to Fe cation. Residues 278 to 294 (GLWMSALGVVGLALNLR) traverse the membrane as a helical segment.

The protein belongs to the reaction center PufL/M/PsbA/D family. In terms of assembly, PSII is composed of 1 copy each of membrane proteins PsbA, PsbB, PsbC, PsbD, PsbE, PsbF, PsbH, PsbI, PsbJ, PsbK, PsbL, PsbM, PsbT, PsbX, PsbY, PsbZ, Psb30/Ycf12, at least 3 peripheral proteins of the oxygen-evolving complex and a large number of cofactors. It forms dimeric complexes. Requires The D1/D2 heterodimer binds P680, chlorophylls that are the primary electron donor of PSII, and subsequent electron acceptors. It shares a non-heme iron and each subunit binds pheophytin, quinone, additional chlorophylls, carotenoids and lipids. There is also a Cl(-1) ion associated with D1 and D2, which is required for oxygen evolution. The PSII complex binds additional chlorophylls, carotenoids and specific lipids. as cofactor.

It localises to the plastid. It is found in the chloroplast thylakoid membrane. The enzyme catalyses 2 a plastoquinone + 4 hnu + 2 H2O = 2 a plastoquinol + O2. Photosystem II (PSII) is a light-driven water:plastoquinone oxidoreductase that uses light energy to abstract electrons from H(2)O, generating O(2) and a proton gradient subsequently used for ATP formation. It consists of a core antenna complex that captures photons, and an electron transfer chain that converts photonic excitation into a charge separation. The D1/D2 (PsbA/PsbD) reaction center heterodimer binds P680, the primary electron donor of PSII as well as several subsequent electron acceptors. D2 is needed for assembly of a stable PSII complex. In Ostreococcus tauri, this protein is Photosystem II D2 protein.